The following is a 208-amino-acid chain: MSFNFTKDFLYSGKVYGLFYKGISVGRLEFNGGSVKITSGYIAIFPNYAPTEAKSGNILLTNVAKGSIRYSYNGADCAGWFIHSVEVAEISKLARPLLDAICYRHVYVGKPGIVANYFVDGDTSKCVVRSIEPFTLVCDPRDVTAGQVLEKNLSTMTVVSVANKVKFNPKGNLTLYIFNTTLRGNDLFDSAHHSVWDCKGGEFYRQSQ.

This is 23 kDa protein from Pea early browning virus.